The primary structure comprises 470 residues: Uronate isomerase (470 aa).

This sequence belongs to the metallo-dependent hydrolases superfamily. Uronate isomerase family.

It catalyses the reaction D-glucuronate = D-fructuronate. The catalysed reaction is aldehydo-D-galacturonate = keto-D-tagaturonate. The protein operates within carbohydrate metabolism; pentose and glucuronate interconversion. The chain is Uronate isomerase from Salmonella agona (strain SL483).